We begin with the raw amino-acid sequence, 272 residues long: uncharacterized protein (272 aa).

E163 is an active-site residue.

The protein belongs to the glycosyl hydrolase 25 family.

This is an uncharacterized protein from Escherichia coli O157:H7.